Consider the following 216-residue polypeptide: 3-isopropylmalate dehydratase small subunit (216 aa).

It belongs to the LeuD family. LeuD type 1 subfamily. As to quaternary structure, heterodimer of LeuC and LeuD.

It carries out the reaction (2R,3S)-3-isopropylmalate = (2S)-2-isopropylmalate. Its pathway is amino-acid biosynthesis; L-leucine biosynthesis; L-leucine from 3-methyl-2-oxobutanoate: step 2/4. Catalyzes the isomerization between 2-isopropylmalate and 3-isopropylmalate, via the formation of 2-isopropylmaleate. This chain is 3-isopropylmalate dehydratase small subunit, found in Acinetobacter baylyi (strain ATCC 33305 / BD413 / ADP1).